The following is a 409-amino-acid chain: DNA polymerase IV 2 (409 aa).

The region spanning 5 to 190 (IFMVDMESFF…LPIECLYGVG (186 aa)) is the UmuC domain. Mg(2+)-binding residues include Asp9 and Asp105. Glu106 is a catalytic residue.

This sequence belongs to the DNA polymerase type-Y family. Monomer. The cofactor is Mg(2+).

The protein localises to the cytoplasm. It carries out the reaction DNA(n) + a 2'-deoxyribonucleoside 5'-triphosphate = DNA(n+1) + diphosphate. Its function is as follows. Poorly processive, error-prone DNA polymerase involved in untargeted mutagenesis. Copies undamaged DNA at stalled replication forks, which arise in vivo from mismatched or misaligned primer ends. These misaligned primers can be extended by PolIV. Exhibits no 3'-5' exonuclease (proofreading) activity. May be involved in translesional synthesis, in conjunction with the beta clamp from PolIII. The polypeptide is DNA polymerase IV 2 (dinB2) (Halalkalibacterium halodurans (strain ATCC BAA-125 / DSM 18197 / FERM 7344 / JCM 9153 / C-125) (Bacillus halodurans)).